A 668-amino-acid polypeptide reads, in one-letter code: DNA ligase (668 aa).

NAD(+) contacts are provided by residues aspartate 32–aspartate 36, serine 81–leucine 82, and glutamate 111. Lysine 113 functions as the N6-AMP-lysine intermediate in the catalytic mechanism. 4 residues coordinate NAD(+): arginine 134, glutamate 171, lysine 290, and lysine 314. Residues cysteine 408, cysteine 411, cysteine 426, and cysteine 432 each contribute to the Zn(2+) site. Positions glutamate 591 to serine 668 constitute a BRCT domain.

It belongs to the NAD-dependent DNA ligase family. LigA subfamily. The cofactor is Mg(2+). Mn(2+) is required as a cofactor.

It catalyses the reaction NAD(+) + (deoxyribonucleotide)n-3'-hydroxyl + 5'-phospho-(deoxyribonucleotide)m = (deoxyribonucleotide)n+m + AMP + beta-nicotinamide D-nucleotide.. Functionally, DNA ligase that catalyzes the formation of phosphodiester linkages between 5'-phosphoryl and 3'-hydroxyl groups in double-stranded DNA using NAD as a coenzyme and as the energy source for the reaction. It is essential for DNA replication and repair of damaged DNA. This chain is DNA ligase, found in Shewanella piezotolerans (strain WP3 / JCM 13877).